The sequence spans 563 residues: Probable Xaa-Pro aminopeptidase PEPP (563 aa).

Mn(2+)-binding residues include D331, D342, E491, and E532.

The protein belongs to the peptidase M24B family. The cofactor is Mn(2+).

It catalyses the reaction Release of any N-terminal amino acid, including proline, that is linked to proline, even from a dipeptide or tripeptide.. Catalyzes the removal of a penultimate prolyl residue from the N-termini of peptides. The sequence is that of Probable Xaa-Pro aminopeptidase PEPP (PEPP) from Verticillium alfalfae (strain VaMs.102 / ATCC MYA-4576 / FGSC 10136) (Verticillium wilt of alfalfa).